The primary structure comprises 132 residues: Large ribosomal subunit protein bL21 (132 aa).

Residues A111–A132 form a disordered region.

It belongs to the bacterial ribosomal protein bL21 family. In terms of assembly, part of the 50S ribosomal subunit. Contacts protein L20.

In terms of biological role, this protein binds to 23S rRNA in the presence of protein L20. In Dehalococcoides mccartyi (strain CBDB1), this protein is Large ribosomal subunit protein bL21.